Here is a 576-residue protein sequence, read N- to C-terminus: Acyl-CoA ligase sidI (576 aa).

A PTS2-type peroxisomal targeting signal motif is present at residues 3–11 (PVTTKTIRP). 3 residues coordinate ATP: Asp439, Arg454, and Lys553.

It belongs to the ATP-dependent AMP-binding enzyme family.

Its subcellular location is the peroxisome. It participates in siderophore biosynthesis. Functionally, acyl-CoA ligase; part of the gene cluster that mediates the biosynthesis of at least 11 siderophores, including beauverichelin A, dimerumic acid (DA), Na-dimethyl coprogen (NADC), eleutherazine B, ferricrocin (FC), fusarinine A, fusarinine C (FsC), metachelin A, mevalonolactone, rhodotorulic acid (RA) and tenellin. This cocktail of siderophores for iron metabolism is essential for virulence, and more specifically for the fungal virulence in penetrating through the host cuticle. Siderophore synthesis is also involved in conidial germination under iron-deficient conditions. For biosynthesis of fusarinine C, the transacylase SIDF transfers anhydromevalonyl to N(5)-hydroxyornithine. The required anhydromevalonyl-CoA moiety is derived from mevalonate by CoA ligation and dehydration catalyzed by SIDI and sidH respectively. The chain is Acyl-CoA ligase sidI from Beauveria bassiana (strain ARSEF 2860) (White muscardine disease fungus).